Consider the following 400-residue polypeptide: Acetate kinase (400 aa).

Mg(2+) is bound at residue N9. K16 lines the ATP pocket. R90 provides a ligand contact to substrate. The active-site Proton donor/acceptor is the D147. ATP-binding positions include 207-211 (HIGNG), 282-284 (DLR), and 330-334 (GIGEN). Mg(2+) is bound at residue E385.

Belongs to the acetokinase family. In terms of assembly, homodimer. Mg(2+) is required as a cofactor. The cofactor is Mn(2+).

It is found in the cytoplasm. The catalysed reaction is acetate + ATP = acetyl phosphate + ADP. The protein operates within metabolic intermediate biosynthesis; acetyl-CoA biosynthesis; acetyl-CoA from acetate: step 1/2. Functionally, catalyzes the formation of acetyl phosphate from acetate and ATP. Can also catalyze the reverse reaction. The protein is Acetate kinase of Staphylococcus aureus (strain JH1).